Reading from the N-terminus, the 593-residue chain is Actin-histidine N-methyltransferase (593 aa).

The tract at residues 1–21 (MGKKSRVKTQKSGTGATAAVS) is disordered. Residues arginine 75, 104-106 (EGF), arginine 254, 275-279 (DMCNH), and 325-327 (SGF) each bind S-adenosyl-L-methionine. Residues 94 to 314 (EGFEIANFEE…AGEQIYIFYG (221 aa)) form the SET domain. Residues 549–593 (GFVNGENSLFNGTKSESENLIKEESNRETEDAKESSSESTDEVKE) form a disordered region. The segment covering 553–562 (GENSLFNGTK) has biased composition (polar residues). Basic and acidic residues predominate over residues 563 to 593 (SESENLIKEESNRETEDAKESSSESTDEVKE).

This sequence belongs to the class V-like SAM-binding methyltransferase superfamily. SETD3 actin-histidine methyltransferase family.

The protein localises to the cytoplasm. The catalysed reaction is L-histidyl-[protein] + S-adenosyl-L-methionine = N(tele)-methyl-L-histidyl-[protein] + S-adenosyl-L-homocysteine + H(+). Its function is as follows. Protein-histidine N-methyltransferase that specifically mediates 3-methylhistidine (tele-methylhistidine) methylation of actin at 'His-73'. Does not have protein-lysine N-methyltransferase activity and probably only catalyzes histidine methylation of actin. This Gallus gallus (Chicken) protein is Actin-histidine N-methyltransferase.